The primary structure comprises 160 residues: 6,7-dimethyl-8-ribityllumazine synthase (160 aa).

Residues Phe-23, 61 to 63, and 85 to 87 each bind 5-amino-6-(D-ribitylamino)uracil; these read SFE and AVI. Position 90–91 (90–91) interacts with (2S)-2-hydroxy-3-oxobutyl phosphate; sequence DT. His-93 acts as the Proton donor in catalysis. Phe-118 serves as a coordination point for 5-amino-6-(D-ribitylamino)uracil. Residue Arg-132 participates in (2S)-2-hydroxy-3-oxobutyl phosphate binding.

This sequence belongs to the DMRL synthase family.

The catalysed reaction is (2S)-2-hydroxy-3-oxobutyl phosphate + 5-amino-6-(D-ribitylamino)uracil = 6,7-dimethyl-8-(1-D-ribityl)lumazine + phosphate + 2 H2O + H(+). The protein operates within cofactor biosynthesis; riboflavin biosynthesis; riboflavin from 2-hydroxy-3-oxobutyl phosphate and 5-amino-6-(D-ribitylamino)uracil: step 1/2. Functionally, catalyzes the formation of 6,7-dimethyl-8-ribityllumazine by condensation of 5-amino-6-(D-ribitylamino)uracil with 3,4-dihydroxy-2-butanone 4-phosphate. This is the penultimate step in the biosynthesis of riboflavin. This is 6,7-dimethyl-8-ribityllumazine synthase from Synechococcus sp. (strain CC9605).